The sequence spans 248 residues: 3-deoxy-manno-octulosonate cytidylyltransferase (248 aa).

This sequence belongs to the KdsB family.

It is found in the cytoplasm. The catalysed reaction is 3-deoxy-alpha-D-manno-oct-2-ulosonate + CTP = CMP-3-deoxy-beta-D-manno-octulosonate + diphosphate. The protein operates within nucleotide-sugar biosynthesis; CMP-3-deoxy-D-manno-octulosonate biosynthesis; CMP-3-deoxy-D-manno-octulosonate from 3-deoxy-D-manno-octulosonate and CTP: step 1/1. Its pathway is bacterial outer membrane biogenesis; lipopolysaccharide biosynthesis. Its function is as follows. Activates KDO (a required 8-carbon sugar) for incorporation into bacterial lipopolysaccharide in Gram-negative bacteria. In Klebsiella pneumoniae (strain 342), this protein is 3-deoxy-manno-octulosonate cytidylyltransferase.